A 506-amino-acid polypeptide reads, in one-letter code: RNA-splicing ligase RtcB homolog 1 (506 aa).

Positions 120, 123, 228, 260, and 354 each coordinate Mn(2+). 227–231 (NHYAE) contacts GMP. Residues 354-355 (HN), 403-406 (GGSM), Ser410, 429-432 (HGAG), and Lys505 each bind GMP. His429 acts as the GMP-histidine intermediate in catalysis.

Belongs to the RtcB family. In terms of assembly, catalytic component of the tRNA-splicing ligase complex. It depends on Mn(2+) as a cofactor.

It catalyses the reaction a 3'-end 3'-phospho-ribonucleotide-RNA + a 5'-end dephospho-ribonucleoside-RNA + GTP = a ribonucleotidyl-ribonucleotide-RNA + GMP + diphosphate. The enzyme catalyses a 3'-end 2',3'-cyclophospho-ribonucleotide-RNA + a 5'-end dephospho-ribonucleoside-RNA + GTP + H2O = a ribonucleotidyl-ribonucleotide-RNA + GMP + diphosphate + H(+). Functionally, catalytic subunit of the tRNA-splicing ligase complex that acts by directly joining spliced tRNA halves to mature-sized tRNAs by incorporating the precursor-derived splice junction phosphate into the mature tRNA as a canonical 3',5'-phosphodiester. May act as an RNA ligase with broad substrate specificity, and may function toward other RNAs. The sequence is that of RNA-splicing ligase RtcB homolog 1 from Culex quinquefasciatus (Southern house mosquito).